The primary structure comprises 173 residues: Transcription factor E (173 aa).

An HTH TFE/IIEalpha-type domain is found at 3-88; the sequence is NNPIIQQVLL…TWRATFTKLP (86 aa).

It belongs to the TFE family. As to quaternary structure, monomer. Interaction with RNA polymerase subunits RpoF and RpoE is necessary for Tfe stimulatory transcription activity. Able to interact with Tbp and RNA polymerase in the absence of DNA promoter. Interacts both with the preinitiation and elongation complexes.

In terms of biological role, transcription factor that plays a role in the activation of archaeal genes transcribed by RNA polymerase. Facilitates transcription initiation by enhancing TATA-box recognition by TATA-box-binding protein (Tbp), and transcription factor B (Tfb) and RNA polymerase recruitment. Not absolutely required for transcription in vitro, but particularly important in cases where Tbp or Tfb function is not optimal. It dynamically alters the nucleic acid-binding properties of RNA polymerases by stabilizing the initiation complex and destabilizing elongation complexes. Seems to translocate with the RNA polymerase following initiation and acts by binding to the non template strand of the transcription bubble in elongation complexes. The sequence is that of Transcription factor E from Methanococcus aeolicus (strain ATCC BAA-1280 / DSM 17508 / OCM 812 / Nankai-3).